The sequence spans 629 residues: Kelch-like protein 13 (629 aa).

One can recognise a BTB domain in the interval 66-135 (CDVTLVPGDG…IYTAKLSLNM (70 aa)). The 102-residue stretch at 170–271 (CVEVGRIANT…TPQDLINYVQ (102 aa)) folds into the BACK domain. Kelch repeat units lie at residues 315–363 (HLVT…VIGN), 364–415 (FLYV…ALKG), 416–462 (HLYA…VYGG), 464–509 (MYIS…TVGD), 511–561 (LYVI…VFEN), and 562–610 (KIYV…TLTV).

As to quaternary structure, component of the BCR(KLHL9-KLHL13) E3 ubiquitin ligase complex, at least composed of CUL3, KLHL9, KLHL13 and RBX1. Interacts with AURKB.

It participates in protein modification; protein ubiquitination. In terms of biological role, substrate-specific adapter of a BCR (BTB-CUL3-RBX1) E3 ubiquitin-protein ligase complex required for mitotic progression and cytokinesis. The BCR(KLHL9-KLHL13) E3 ubiquitin ligase complex mediates the ubiquitination of AURKB and controls the dynamic behavior of AURKB on mitotic chromosomes and thereby coordinates faithful mitotic progression and completion of cytokinesis. The sequence is that of Kelch-like protein 13 (KLHL13) from Gallus gallus (Chicken).